Here is a 474-residue protein sequence, read N- to C-terminus: Magnesium transporter MRS2-A, chloroplastic (474 aa).

A chloroplast-targeting transit peptide spans 1-55 (MASVSSSPSYSSQAAVLLLLHQPPHQHGHGGACLRYRGSQSQGRGNAVATSLGLS). The segment at 79–129 (GKDGRAVTKDEEEEAAAAAVEEEGEVEVRREEDKPGDDGSREAAARGSGSG) is disordered. Residues 88 to 103 (DEEEEAAAAAVEEEGE) show a composition bias toward acidic residues. Over residues 104–122 (VEVRREEDKPGDDGSREAA) the composition is skewed to basic and acidic residues. 2 consecutive transmembrane segments (helical) span residues 412–432 (LLLQ…GIFG) and 444–464 (WAFW…FFIM). The short motif at 432 to 434 (GMN) is the Required for magnesium transport activity element.

Belongs to the CorA metal ion transporter (MIT) (TC 1.A.35.5) family.

It localises to the plastid. It is found in the chloroplast membrane. Its function is as follows. Magnesium transporter that may mediate the influx of magnesium in chloroplast. This chain is Magnesium transporter MRS2-A, chloroplastic (MRS2-A), found in Oryza sativa subsp. japonica (Rice).